The following is a 395-amino-acid chain: F-box protein At5g46170 (395 aa).

The F-box domain occupies 24–72; sequence IDHFDHLPDSILLLVFNKIGDVKALGRCCVVSRRFHSLVPQVDNVVVRV. Residues 122–158 form a disordered region; it reads TKRSSSSCGGSGSSSSSLSISGDDDGGEIEQGGVTHH. The segment covering 125–142 has biased composition (low complexity); that stretch reads SSSSCGGSGSSSSSLSIS.

This chain is F-box protein At5g46170, found in Arabidopsis thaliana (Mouse-ear cress).